A 138-amino-acid chain; its full sequence is uncharacterized protein (138 aa).

A helical transmembrane segment spans residues 19 to 40 (ECKVSVISFFLLAFLLMAHIWL). 3 repeat units span residues 94–106 (KGEIEGKEEKKEG), 107–119 (KGEIEGKEEKKEG), and 120–132 (KGEIEGKEEKKEV). Residues 94–132 (KGEIEGKEEKKEGKGEIEGKEEKKEGKGEIEGKEEKKEV) form a 3 X 13 AA tandem repeats of K-G-E-I-E-G-K-E-E-K-K-E-[GV] region. The interval 98 to 138 (EGKEEKKEGKGEIEGKEEKKEGKGEIEGKEEKKEVENGPRK) is disordered.

In terms of tissue distribution, expressed in roots, leaves and flowers.

It localises to the mitochondrion membrane. Functionally, involved in cytoplasmic male sterility (CMS) by leading to pollen abortion. Not expressed in fertile (normal) plants. This is an uncharacterized protein from Raphanus sativus (Radish).